The following is a 364-amino-acid chain: MANKTILFNKHLESNAKMVDFHGWDMPLNYGSQIEEHNAVRQDAGMFDVSHMTVVDVIGNDACAFLRKLLANDVAKLKVPGKALYGGMLDENAGVIDDLITYYLTDTNYRVVVNSATREKDLAWIAKQSQGFDVTVTERPELAMIAVQGPNAKAKAAAVLSAEQNAAIEGMKPFFGKQAGSLFIATTGYTGEAGYEIIVPEDEAQAMWQALLDQGVKPCGLGARDTLRLEAGMNLYGLDMDETINPLAANMGWTIAWEPSDRDFIGRKALETLRDAGTDKLVGLVMEEKGVLRHDMPVFFTDSAGVEHQGVITSGTFSPTLGYSIAMARVPNSIGDTAEVEMRKKRVAVRVVAPNFVRNGKQAF.

The protein belongs to the GcvT family. As to quaternary structure, the glycine cleavage system is composed of four proteins: P, T, L and H.

The enzyme catalyses N(6)-[(R)-S(8)-aminomethyldihydrolipoyl]-L-lysyl-[protein] + (6S)-5,6,7,8-tetrahydrofolate = N(6)-[(R)-dihydrolipoyl]-L-lysyl-[protein] + (6R)-5,10-methylene-5,6,7,8-tetrahydrofolate + NH4(+). In terms of biological role, the glycine cleavage system catalyzes the degradation of glycine. The polypeptide is Aminomethyltransferase (Shewanella baltica (strain OS195)).